The sequence spans 752 residues: Phosphoribosylformylglycinamidine synthase subunit PurL (752 aa).

His-58 is a catalytic residue. ATP is bound by residues Tyr-61 and Lys-103. Residue Glu-105 participates in Mg(2+) binding. Substrate contacts are provided by residues Ser-106–His-109 and Arg-128. His-107 (proton acceptor) is an active-site residue. Residue Asp-129 coordinates Mg(2+). Gln-253 contributes to the substrate binding site. Mg(2+) is bound at residue Asp-281. Glu-325 to Gln-327 provides a ligand contact to substrate. ATP-binding residues include Asp-513 and Gly-550. A Mg(2+)-binding site is contributed by Asn-551. Ser-553 contacts substrate.

Belongs to the FGAMS family. In terms of assembly, monomer. Part of the FGAM synthase complex composed of 1 PurL, 1 PurQ and 2 PurS subunits.

It is found in the cytoplasm. The catalysed reaction is N(2)-formyl-N(1)-(5-phospho-beta-D-ribosyl)glycinamide + L-glutamine + ATP + H2O = 2-formamido-N(1)-(5-O-phospho-beta-D-ribosyl)acetamidine + L-glutamate + ADP + phosphate + H(+). It functions in the pathway purine metabolism; IMP biosynthesis via de novo pathway; 5-amino-1-(5-phospho-D-ribosyl)imidazole from N(2)-formyl-N(1)-(5-phospho-D-ribosyl)glycinamide: step 1/2. Functionally, part of the phosphoribosylformylglycinamidine synthase complex involved in the purines biosynthetic pathway. Catalyzes the ATP-dependent conversion of formylglycinamide ribonucleotide (FGAR) and glutamine to yield formylglycinamidine ribonucleotide (FGAM) and glutamate. The FGAM synthase complex is composed of three subunits. PurQ produces an ammonia molecule by converting glutamine to glutamate. PurL transfers the ammonia molecule to FGAR to form FGAM in an ATP-dependent manner. PurS interacts with PurQ and PurL and is thought to assist in the transfer of the ammonia molecule from PurQ to PurL. The polypeptide is Phosphoribosylformylglycinamidine synthase subunit PurL (Streptomyces coelicolor (strain ATCC BAA-471 / A3(2) / M145)).